A 291-amino-acid chain; its full sequence is Acetyl-coenzyme A carboxylase carboxyl transferase subunit beta (291 aa).

The CoA carboxyltransferase N-terminal domain maps to 36-291; that stretch reads MWVKCDGCGK…KILVIHGRGN (256 aa). Residues Cys-40, Cys-43, Cys-59, and Cys-62 each contribute to the Zn(2+) site. A C4-type zinc finger spans residues 40-62; sequence CDGCGKVLYKNDMEKNNKVCYHC.

Belongs to the AccD/PCCB family. Acetyl-CoA carboxylase is a heterohexamer composed of biotin carboxyl carrier protein (AccB), biotin carboxylase (AccC) and two subunits each of ACCase subunit alpha (AccA) and ACCase subunit beta (AccD). The cofactor is Zn(2+).

Its subcellular location is the cytoplasm. It carries out the reaction N(6)-carboxybiotinyl-L-lysyl-[protein] + acetyl-CoA = N(6)-biotinyl-L-lysyl-[protein] + malonyl-CoA. Its pathway is lipid metabolism; malonyl-CoA biosynthesis; malonyl-CoA from acetyl-CoA: step 1/1. Its function is as follows. Component of the acetyl coenzyme A carboxylase (ACC) complex. Biotin carboxylase (BC) catalyzes the carboxylation of biotin on its carrier protein (BCCP) and then the CO(2) group is transferred by the transcarboxylase to acetyl-CoA to form malonyl-CoA. In Clostridium kluyveri (strain NBRC 12016), this protein is Acetyl-coenzyme A carboxylase carboxyl transferase subunit beta.